The sequence spans 451 residues: 3-carboxy-cis,cis-muconate cycloisomerase (451 aa).

Belongs to the class-II fumarase/aspartase family. In terms of assembly, homotetramer.

The catalysed reaction is 2-(carboxymethyl)-5-oxo-2,5-dihydro-2-furoate = 3-carboxy-cis,cis-muconate + H(+). The protein operates within aromatic compound metabolism; beta-ketoadipate pathway; 5-oxo-4,5-dihydro-2-furylacetate from 3-carboxy-cis,cis-muconate: step 1/2. Its function is as follows. Catalyzes an anti cycloisomerization. The sequence is that of 3-carboxy-cis,cis-muconate cycloisomerase (pcaB) from Acinetobacter baylyi (strain ATCC 33305 / BD413 / ADP1).